Here is a 243-residue protein sequence, read N- to C-terminus: Protein Thf1 (243 aa).

Positions 180 to 224 (SKARVEKDLNLYKSNLEKMAQAVELTEQILESERRKREQNESAKL) form a coiled coil. Residues 210–220 (ESERRKREQNE) are compositionally biased toward basic and acidic residues. The disordered stretch occupies residues 210-243 (ESERRKREQNESAKLNTGSSEQMSQGVEACSNIS). Over residues 221-243 (SAKLNTGSSEQMSQGVEACSNIS) the composition is skewed to polar residues.

The protein belongs to the THF1 family.

Its function is as follows. May be involved in photosynthetic membrane biogenesis. This Prochlorococcus marinus (strain MIT 9313) protein is Protein Thf1.